The following is a 162-amino-acid chain: MGQAQSDENSIPTTTTTNTPPPSANSPRDSEDTSSPSMDSLLAEAAAYGEDDNENESLEAKAQRALDCPCIADLRNGSCGSQFSEAFLCFLKSTAEEKGSDCVNPFVALQSCINANPDAFSKSVTGDEKETEKKEEQPPVQDHRIIPPLWAKDPPRSGNSKL.

The tract at residues 1 to 61 (MGQAQSDENS…DNENESLEAK (61 aa)) is disordered. The span at 9-18 (NSIPTTTTTN) shows a compositional bias: low complexity. Cystine bridges form between Cys68-Cys70, Cys79-Cys112, and Cys89-Cys102. The region spanning 76 to 120 (NGSCGSQFSEAFLCFLKSTAEEKGSDCVNPFVALQSCINANPDAF) is the CHCH domain. 2 short sequence motifs (cx9C motif) span residues 79 to 89 (CGSQFSEAFLC) and 102 to 112 (CVNPFVALQSC). Residues 119–162 (AFSKSVTGDEKETEKKEEQPPVQDHRIIPPLWAKDPPRSGNSKL) are disordered. The segment covering 125–145 (TGDEKETEKKEEQPPVQDHRI) has biased composition (basic and acidic residues).

It localises to the mitochondrion intermembrane space. Its subcellular location is the peroxisome matrix. Required for the import and folding of small cysteine-containing proteins in the mitochondrial intermembrane space. Involved in the mitochondrial oxidative folding of the copper-zinc superoxide dismutase CSD1, the copper chaperone for superoxide dismutase CCS, and subunits of the mitochondrial membrane respiratory chain NADH dehydrogenase (Complex I). Involved in the peroxisomal oxidative folding of the copper-zinc superoxide dismutase CSD3, and the fatty acid beta-oxidation multifunctional protein AIM1. This Arabidopsis thaliana (Mouse-ear cress) protein is Mitochondrial intermembrane space import and assembly protein 40 homolog.